The sequence spans 397 residues: Lysophospholipid transporter LplT (397 aa).

Transmembrane regions (helical) follow at residues 21–41 (SAQFLSAFGDNALLFATLALL), 53–73 (ILQMVFVGAYILFAPFVGQVA), 91–111 (LGAASICFGFNPFIGYTLVGI), 139–159 (LMESSTIAAILLGSVAGGVLA), 164–184 (LAALGICAVVYAGAVVANLFI), 229–249 (WGAGVTLRFLLVLWVPTALGI), 257–277 (YLNAMVAVGIVVGAGAAAKLV), 281–301 (TVRRCMPAGILIGVGVLFFSL), 304–324 (ALLPAYGLLILIGILGGFFIV), 344–364 (IAVQNLGENTAMLLMLGLYSL), and 372–392 (VVGIGVGFGALFALAITGLWI).

Belongs to the major facilitator superfamily. LplT (TC 2.A.1.42) family.

It is found in the cell inner membrane. Catalyzes the facilitated diffusion of 2-acyl-glycero-3-phosphoethanolamine (2-acyl-GPE) into the cell. The sequence is that of Lysophospholipid transporter LplT from Enterobacter sp. (strain 638).